The chain runs to 492 residues: Endoglucanase 15 (492 aa).

The first 30 residues, Met1–Ala30, serve as a signal peptide directing secretion. Asp86 (nucleophile) is an active-site residue. Active-site residues include His414, Asp466, and Glu475.

Belongs to the glycosyl hydrolase 9 (cellulase E) family.

It is found in the secreted. The catalysed reaction is Endohydrolysis of (1-&gt;4)-beta-D-glucosidic linkages in cellulose, lichenin and cereal beta-D-glucans.. The protein is Endoglucanase 15 of Arabidopsis thaliana (Mouse-ear cress).